The chain runs to 888 residues: Autotaxin (888 aa).

An N-terminal signal peptide occupies residues 1-27 (MARRRSCQLHQVISLFTFAVGVNICLG). Positions 28-35 (VTANRIKR) are cleaved as a propeptide — removed by furin. The N-linked (GlcNAc...) asparagine glycan is linked to N54. SMB domains follow at residues 55 to 98 (ISGS…LKTA) and 99 to 143 (GGWE…GESH). 10 disulfides stabilise this stretch: C59–C76, C63–C94, C74–C87, C80–C86, C103–C120, C108–C138, C118–C131, C124–C130, C149–C195, and C157–C351. A Cell attachment site motif is present at residues 127–129 (RGD). Residues 145–502 (VDDDCEEIKT…PTFKYKTKVP (358 aa)) are phosphodiesterase. Zn(2+)-binding residues include D172 and T210. The active-site Nucleophile is T210. 1-(9Z-octadecenoyl)-sn-glycero-3-phosphate is bound by residues T210, N231, and D312. 3 residues coordinate 1-hexadecanoyl-sn-glycero-3-phosphate: T210, N231, and D312. 1-tetradecanoyl-sn-glycerol 3-phosphate is bound by residues T210, N231, and D312. Zn(2+) contacts are provided by D312, H316, D359, and H360. Cystine bridges form between C367–C469, C414–C831, C567–C692, C569–C677, and C800–C810. N-linked (GlcNAc...) asparagine glycosylation is present at N411. H475 is a Zn(2+) binding site. H475 contacts 1-(9Z-octadecenoyl)-sn-glycero-3-phosphate. H475 is a 1-hexadecanoyl-sn-glycero-3-phosphate binding site. 1-tetradecanoyl-sn-glycerol 3-phosphate is bound at residue H475. N-linked (GlcNAc...) asparagine glycosylation occurs at N525. The segment at 623-888 (LYGRPAVLYR…TYLQTYESEI (266 aa)) is nuclease-like domain. 5 residues coordinate Ca(2+): D765, D767, D769, L771, and D773. The N-linked (GlcNAc...) asparagine glycan is linked to N832. A required for secretion region spans residues 855–876 (IEHLTSLDFFRKTSRSYPEILT).

It belongs to the nucleotide pyrophosphatase/phosphodiesterase family. It depends on Zn(2+) as a cofactor. Requires Ca(2+) as cofactor. Post-translationally, N-glycosylation, but not furin-cleavage, plays a critical role on secretion and on lysoPLD activity. The interdomain disulfide bond between Cys-414 and Cys-831 is essential for catalytic activity. In terms of tissue distribution, detected in fetal serum (at protein level).

Its subcellular location is the secreted. It carries out the reaction a 1-O-alkyl-sn-glycero-3-phosphoethanolamine + H2O = a 1-O-alkyl-sn-glycero-3-phosphate + ethanolamine + H(+). The enzyme catalyses a 1-acyl-sn-glycero-3-phosphoethanolamine + H2O = a 1-acyl-sn-glycero-3-phosphate + ethanolamine + H(+). The catalysed reaction is 1-(9Z-octadecenoyl)-sn-glycero-3-phosphoethanolamine + H2O = 1-(9Z-octadecenoyl)-sn-glycero-3-phosphate + ethanolamine + H(+). It catalyses the reaction a 1-O-alkyl-sn-glycero-3-phosphocholine + H2O = a 1-O-alkyl-sn-glycero-3-phosphate + choline + H(+). It carries out the reaction 1-O-(9Z-octadecenyl)-sn-glycero-3-phosphocholine + H2O = 1-O-(9Z-octadecenyl)-sn-glycero-3-phosphate + choline + H(+). The enzyme catalyses 1-O-hexadecyl-sn-glycero-3-phosphocholine + H2O = 1-O-hexadecyl-sn-glycero-3-phosphate + choline + H(+). The catalysed reaction is a 1-O-(1Z-alkenyl)-sn-glycero-3-phosphocholine + H2O = a 1-O-(1Z-alkenyl)-sn-glycero-3-phosphate + choline + H(+). It catalyses the reaction a 1-acyl-sn-glycero-3-phosphocholine + H2O = a 1-acyl-sn-glycero-3-phosphate + choline + H(+). It carries out the reaction 1-dodecanoyl-sn-glycero-3-phosphocholine + H2O = 1-dodecanoyl-sn-glycerol 3-phosphate + choline + H(+). The enzyme catalyses 1-(9Z-octadecenoyl)-sn-glycero-3-phosphocholine + H2O = 1-(9Z-octadecenoyl)-sn-glycero-3-phosphate + choline + H(+). The catalysed reaction is 1-tetradecanoyl-sn-glycero-3-phosphocholine + H2O = 1-tetradecanoyl-sn-glycerol 3-phosphate + choline + H(+). It catalyses the reaction 1-decanoyl-sn-glycero-3-phosphocholine + H2O = 1-decanoyl-sn-glycero-3-phosphate + choline + H(+). It carries out the reaction 1-octadecanoyl-sn-glycero-3-phosphocholine + H2O = 1-octadecanoyl-sn-glycero-3-phosphate + choline + H(+). The enzyme catalyses 1-hexadecanoyl-sn-glycero-3-phosphocholine + H2O = 1-hexadecanoyl-sn-glycero-3-phosphate + choline + H(+). The catalysed reaction is 1-hexanoyl-sn-glycero-3-phosphocholine + H2O = 1-hexanoyl-sn-glycero-3-phosphate + choline + H(+). It catalyses the reaction 1-(9Z,12Z)-octadecadienoyl-sn-glycero-3-phosphocholine + H2O = 1-(9Z,12Z)-octadecadienoyl-sn-glycero-3-phosphate + choline + H(+). It carries out the reaction sphing-4-enine-phosphocholine + H2O = sphing-4-enine 1-phosphate + choline + H(+). The enzyme catalyses 1-(5Z,8Z,11Z,14Z-eicosatetraenoyl)-sn-glycero-3-phosphocholine + H2O = 1-(5Z,8Z,11Z,14Z-eicosatetraenoyl)-sn-glycero-3-phosphate + choline + H(+). The catalysed reaction is a 2-acyl-sn-glycero-3-phosphocholine + H2O = a 2-acyl-sn-glycerol 3-phosphate + choline + H(+). It catalyses the reaction a 1,2-diacyl-sn-glycero-3-phosphocholine + H2O = a 1,2-diacyl-sn-glycero-3-phosphate + choline + H(+). It carries out the reaction 1,2-dioctanoyl-sn-glycero-3-phosphocholine + H2O = 1,2-dioctanoyl-sn-glycero-3-phosphate + choline + H(+). The enzyme catalyses 1,2-didecanoyl-sn-glycero-3-phosphocholine + H2O = 1,2-didecanoyl-sn-glycero-3-phosphate + choline + H(+). The catalysed reaction is a 1-acyl-sn-glycero-3-phospho-L-serine + H2O = a 1-acyl-sn-glycero-3-phosphate + L-serine + H(+). It catalyses the reaction 1-(9Z-octadecenoyl)-sn-glycero-3-phospho-L-serine + H2O = 1-(9Z-octadecenoyl)-sn-glycero-3-phosphate + L-serine + H(+). It carries out the reaction a 2-acyl-sn-glycero-3-phospho-L-serine + H2O = a 2-acyl-sn-glycerol 3-phosphate + L-serine + H(+). In terms of biological role, secreted lysophospholipase D that hydrolyzes lysophospholipids to produce the signaling molecule lysophosphatidic acid (LPA) in extracellular fluids. Its major substrate is lysophosphatidylcholine. Can also act on sphingosylphosphorylcholine producing sphingosine-1-phosphate, a modulator of cell motility. Can hydrolyze, in vitro, bis-pNPP, to some extent pNP-TMP, and barely ATP. Involved in several motility-related processes such as angiogenesis and neurite outgrowth. Acts as an angiogenic factor by stimulating migration of smooth muscle cells and microtubule formation. Stimulates migration of melanoma cells, probably via a pertussis toxin-sensitive G protein. May have a role in induction of parturition. Possible involvement in cell proliferation and adipose tissue development. Required for LPA production in activated platelets, cleaves the sn-1 lysophospholipids to generate sn-1 lysophosphatidic acids containing predominantly 18:2 and 20:4 fatty acids. Shows a preference for the sn-1 to the sn-2 isomer of 1-O-alkyl-sn-glycero-3-phosphocholine (lyso-PAF). The protein is Autotaxin of Bos taurus (Bovine).